Here is a 127-residue protein sequence, read N- to C-terminus: Large ribosomal subunit protein bL21 (127 aa).

This sequence belongs to the bacterial ribosomal protein bL21 family. Part of the 50S ribosomal subunit. Contacts protein L20.

Functionally, this protein binds to 23S rRNA in the presence of protein L20. This chain is Large ribosomal subunit protein bL21, found in Blochmanniella floridana.